Here is a 644-residue protein sequence, read N- to C-terminus: DNA gyrase subunit B (644 aa).

Residues 429-543 (CEIFLVEGDS…AGYVYIAQPP (115 aa)) form the Toprim domain. Mg(2+)-binding residues include E435, D508, and D510.

It belongs to the type II topoisomerase GyrB family. In terms of assembly, heterotetramer, composed of two GyrA and two GyrB chains. In the heterotetramer, GyrA contains the active site tyrosine that forms a transient covalent intermediate with DNA, while GyrB binds cofactors and catalyzes ATP hydrolysis. Requires Mg(2+) as cofactor. It depends on Mn(2+) as a cofactor. Ca(2+) is required as a cofactor.

The protein resides in the cytoplasm. The enzyme catalyses ATP-dependent breakage, passage and rejoining of double-stranded DNA.. Its function is as follows. A type II topoisomerase that negatively supercoils closed circular double-stranded (ds) DNA in an ATP-dependent manner to modulate DNA topology and maintain chromosomes in an underwound state. Negative supercoiling favors strand separation, and DNA replication, transcription, recombination and repair, all of which involve strand separation. Also able to catalyze the interconversion of other topological isomers of dsDNA rings, including catenanes and knotted rings. Type II topoisomerases break and join 2 DNA strands simultaneously in an ATP-dependent manner. The protein is DNA gyrase subunit B of Staphylococcus aureus (strain MRSA252).